Consider the following 295-residue polypeptide: 4-hydroxy-tetrahydrodipicolinate synthase (295 aa).

Thr46 is a pyruvate binding site. Tyr134 functions as the Proton donor/acceptor in the catalytic mechanism. Lys162 functions as the Schiff-base intermediate with substrate in the catalytic mechanism. Ile205 lines the pyruvate pocket.

It belongs to the DapA family. As to quaternary structure, homotetramer; dimer of dimers.

Its subcellular location is the cytoplasm. The catalysed reaction is L-aspartate 4-semialdehyde + pyruvate = (2S,4S)-4-hydroxy-2,3,4,5-tetrahydrodipicolinate + H2O + H(+). It functions in the pathway amino-acid biosynthesis; L-lysine biosynthesis via DAP pathway; (S)-tetrahydrodipicolinate from L-aspartate: step 3/4. Its function is as follows. Catalyzes the condensation of (S)-aspartate-beta-semialdehyde [(S)-ASA] and pyruvate to 4-hydroxy-tetrahydrodipicolinate (HTPA). In Anaeromyxobacter dehalogenans (strain 2CP-1 / ATCC BAA-258), this protein is 4-hydroxy-tetrahydrodipicolinate synthase.